The primary structure comprises 387 residues: Killer cell lectin-like receptor subfamily G member 2 (387 aa).

The interval Met-1 to Ala-105 is disordered. A compositionally biased stretch (basic and acidic residues) spans Ala-15–Trp-27. The residue at position 143 (Ser-143) is a Phosphoserine. Residues Gln-155–Ala-174 form a disordered region. A helical transmembrane segment spans residues Trp-241–Ala-261. A C-type lectin domain is found at Ser-278–Ala-383. Disulfide bonds link Cys-299–Cys-382 and Cys-361–Cys-374.

It localises to the membrane. This chain is Killer cell lectin-like receptor subfamily G member 2 (Klrg2), found in Mus musculus (Mouse).